Here is a 162-residue protein sequence, read N- to C-terminus: Protein S40-4 (162 aa).

It belongs to the senescence regulator S40 family.

It localises to the cytoplasm. This is Protein S40-4 from Arabidopsis thaliana (Mouse-ear cress).